Reading from the N-terminus, the 523-residue chain is GMP synthase [glutamine-hydrolyzing] (523 aa).

The Glutamine amidotransferase type-1 domain maps to 18-208; sequence KILIVDFGGQ…LYNVCGAKGD (191 aa). C95 functions as the Nucleophile in the catalytic mechanism. Active-site residues include H182 and E184. The GMPS ATP-PPase domain occupies 209–398; it reads WNMKSFLAEA…LGLPDYLVHR (190 aa). 236–242 lines the ATP pocket; the sequence is SGGVDSS.

Homodimer.

It catalyses the reaction XMP + L-glutamine + ATP + H2O = GMP + L-glutamate + AMP + diphosphate + 2 H(+). It functions in the pathway purine metabolism; GMP biosynthesis; GMP from XMP (L-Gln route): step 1/1. Its function is as follows. Catalyzes the synthesis of GMP from XMP. The protein is GMP synthase [glutamine-hydrolyzing] of Treponema denticola (strain ATCC 35405 / DSM 14222 / CIP 103919 / JCM 8153 / KCTC 15104).